Here is a 165-residue protein sequence, read N- to C-terminus: Cyclic pyranopterin monophosphate synthase (165 aa).

Residues 76–78 (LCH) and 119–120 (ME) contribute to the substrate site. Aspartate 134 is a catalytic residue.

The protein belongs to the MoaC family. As to quaternary structure, homohexamer; trimer of dimers.

The enzyme catalyses (8S)-3',8-cyclo-7,8-dihydroguanosine 5'-triphosphate = cyclic pyranopterin phosphate + diphosphate. It functions in the pathway cofactor biosynthesis; molybdopterin biosynthesis. In terms of biological role, catalyzes the conversion of (8S)-3',8-cyclo-7,8-dihydroguanosine 5'-triphosphate to cyclic pyranopterin monophosphate (cPMP). This chain is Cyclic pyranopterin monophosphate synthase, found in Photobacterium profundum (strain SS9).